A 336-amino-acid chain; its full sequence is USG-1 protein homolog (336 aa).

This sequence belongs to the aspartate-semialdehyde dehydrogenase family.

This is USG-1 protein homolog (usg) from Pseudomonas aeruginosa (strain ATCC 15692 / DSM 22644 / CIP 104116 / JCM 14847 / LMG 12228 / 1C / PRS 101 / PAO1).